A 425-amino-acid chain; its full sequence is Serine--tRNA ligase (425 aa).

T230–E232 is an L-serine binding site. R261–E263 provides a ligand contact to ATP. E284 lines the L-serine pocket. ATP is bound at residue E348–S351. Residue S385 participates in L-serine binding.

Belongs to the class-II aminoacyl-tRNA synthetase family. Type-1 seryl-tRNA synthetase subfamily. As to quaternary structure, homodimer. The tRNA molecule binds across the dimer.

The protein resides in the cytoplasm. It catalyses the reaction tRNA(Ser) + L-serine + ATP = L-seryl-tRNA(Ser) + AMP + diphosphate + H(+). The enzyme catalyses tRNA(Sec) + L-serine + ATP = L-seryl-tRNA(Sec) + AMP + diphosphate + H(+). It functions in the pathway aminoacyl-tRNA biosynthesis; selenocysteinyl-tRNA(Sec) biosynthesis; L-seryl-tRNA(Sec) from L-serine and tRNA(Sec): step 1/1. Catalyzes the attachment of serine to tRNA(Ser). Is also able to aminoacylate tRNA(Sec) with serine, to form the misacylated tRNA L-seryl-tRNA(Sec), which will be further converted into selenocysteinyl-tRNA(Sec). The polypeptide is Serine--tRNA ligase (Wolbachia sp. subsp. Brugia malayi (strain TRS)).